Here is a 1093-residue protein sequence, read N- to C-terminus: Mediator of RNA polymerase II transcription subunit 14 (1093 aa).

2 disordered regions span residues 1–62 (MPGV…IDGH) and 1034–1065 (ETKSEQDYSTQPAPENQSQTGAPSQAGMANDT). A compositionally biased stretch (polar residues) spans 19–31 (DTQTPSNGDNLRN). A compositionally biased stretch (basic and acidic residues) spans 41–62 (KGDKDHDPDKESYAGKPRIDGH). Positions 1040–1056 (DYSTQPAPENQSQTGAP) are enriched in polar residues.

It belongs to the Mediator complex subunit 14 family. Component of the Mediator complex.

The protein localises to the nucleus. Component of the Mediator complex, a coactivator involved in the regulated transcription of nearly all RNA polymerase II-dependent genes. Mediator functions as a bridge to convey information from gene-specific regulatory proteins to the basal RNA polymerase II transcription machinery. Mediator is recruited to promoters by direct interactions with regulatory proteins and serves as a scaffold for the assembly of a functional preinitiation complex with RNA polymerase II and the general transcription factors. This Aspergillus fumigatus (strain ATCC MYA-4609 / CBS 101355 / FGSC A1100 / Af293) (Neosartorya fumigata) protein is Mediator of RNA polymerase II transcription subunit 14 (rgr1).